We begin with the raw amino-acid sequence, 892 residues long: Chromodomain-helicase-DNA-binding protein 3 (892 aa).

A compositionally biased stretch (basic and acidic residues) spans 1 to 20 (MSSKRGADPDWKTPGKASKD). The tract at residues 1–29 (MSSKRGADPDWKTPGKASKDKRPKTNAKK) is disordered. The PHD-type zinc-finger motif lies at 35 to 82 (EEYCKVCSDGGDLLCCDSCPSVYHRTCLSPPLKSIPKGDWICPRCIPL). Chromo domains lie at 84-156 (GKAE…PSLE) and 179-240 (LLVQ…GRQR). The Helicase ATP-binding domain occupies 279 to 458 (RYSWGQGIPT…FHLLNFLSSG (180 aa)). ATP is bound at residue 292–299 (DEMGLGKT). The DEAH box motif lies at 409-412 (DEAH). The region spanning 590 to 739 (LLSKMLKQLK…LTHLVVRPGM (150 aa)) is the Helicase C-terminal domain. Residues 839–892 (SQPKLPKKQKKQSQQSQVDVESIMGKGKRIRKEIDYSNQYPSPNRATPSSIVLM) are disordered. Residues 874–892 (YSNQYPSPNRATPSSIVLM) are compositionally biased toward polar residues.

It belongs to the SNF2/RAD54 helicase family. As to quaternary structure, monomer.

The protein resides in the nucleus. It is found in the chromosome. The enzyme catalyses ATP + H2O = ADP + phosphate + H(+). With respect to regulation, ATPase activity is stimulated by binding to DNA or nucleosomes, but is strongly activated by nucleosomes. Its function is as follows. ATP-dependent chromatin-remodeling factor which acts in nucleosome-remodeling by catalyzing ATP-dependent nucleosome mobilization. Likely to be involved in the regulation of transcription. The polypeptide is Chromodomain-helicase-DNA-binding protein 3 (Drosophila melanogaster (Fruit fly)).